Reading from the N-terminus, the 710-residue chain is DNA ligase (710 aa).

The segment at 1–26 (MPEDAIGQQVPPEQEAAGAEPTSAAR) is disordered. NAD(+) is bound by residues 53–57 (DAEFD), 102–103 (SL), and E132. K134 serves as the catalytic N6-AMP-lysine intermediate. 4 residues coordinate NAD(+): R155, E196, K312, and K336. Residues C430, C433, C449, and C455 each coordinate Zn(2+). A BRCT domain is found at 619–708 (EGPRPLEGMT…PDAAREVARV (90 aa)).

The protein belongs to the NAD-dependent DNA ligase family. LigA subfamily. The cofactor is Mg(2+). Mn(2+) serves as cofactor.

The enzyme catalyses NAD(+) + (deoxyribonucleotide)n-3'-hydroxyl + 5'-phospho-(deoxyribonucleotide)m = (deoxyribonucleotide)n+m + AMP + beta-nicotinamide D-nucleotide.. Functionally, DNA ligase that catalyzes the formation of phosphodiester linkages between 5'-phosphoryl and 3'-hydroxyl groups in double-stranded DNA using NAD as a coenzyme and as the energy source for the reaction. It is essential for DNA replication and repair of damaged DNA. The protein is DNA ligase of Salinispora arenicola (strain CNS-205).